Consider the following 78-residue polypeptide: Ferredoxin (78 aa).

4Fe-4S ferredoxin-type domains are found at residues 2 to 29 (FVITSPCIGEKAADCVETCPVDAIHEGP) and 30 to 59 (DQYYIDPDLCIDCAACEPVCPVNAIYQEEF). Positions 8 and 16 each coordinate [3Fe-4S] cluster. Cys-20, Cys-39, Cys-42, and Cys-45 together coordinate [4Fe-4S] cluster. A [3Fe-4S] cluster-binding site is contributed by Cys-49.

Requires [3Fe-4S] cluster as cofactor. The cofactor is [4Fe-4S] cluster.

Functionally, ferredoxins are iron-sulfur proteins that transfer electrons in a wide variety of metabolic reactions. This Alicyclobacillus acidocaldarius subsp. acidocaldarius (Bacillus acidocaldarius) protein is Ferredoxin.